We begin with the raw amino-acid sequence, 164 residues long: MTDDLVNEYAPAFAPFFGFAGCAAAMILSSLGAAIGTAKSGIGISGIGTFRPELIMKSLIPVVMSGILAVYGLVVAVLVAGGLSPTEEYTLFNGFMHLAAGLCVGFACLSSGYAIGIVGDVGVRKFMHQPRLFVGIVLILIFAEVLGLYGMIIALILNTRGSGN.

At M1–P15 the chain is on the lumenal side. Residues F16 to G36 form a helical membrane-spanning segment. Topologically, residues T37–S58 are cytoplasmic. A helical membrane pass occupies residues L59–V79. The Lumenal portion of the chain corresponds to A80–H97. Residues L98 to V118 form a helical membrane-spanning segment. Over G119–G135 the chain is Cytoplasmic. The chain crosses the membrane as a helical span at residues I136–I156. At L157–N164 the chain is on the lumenal side.

The protein belongs to the V-ATPase proteolipid subunit family. In terms of assembly, V-ATPase is a heteromultimeric enzyme composed of a peripheral catalytic V1 complex (components A to H) attached to an integral membrane V0 proton pore complex (components: a, c, c', c'', d, e, f and VOA1). The decameric c-ring forms the proton-conducting pore, and is composed of eight proteolipid subunits c, one subunit c' and one subunit c''.

The protein localises to the vacuole membrane. In terms of biological role, proton-conducting pore forming subunit of the V0 complex of vacuolar(H+)-ATPase (V-ATPase), a multisubunit enzyme composed of a peripheral complex (V1) that hydrolyzes ATP and a membrane integral complex (V0) that translocates protons. V-ATPase is responsible for acidifying and maintaining the pH of intracellular compartments. The sequence is that of V-type proton ATPase subunit c' (VMA11) from Eremothecium gossypii (strain ATCC 10895 / CBS 109.51 / FGSC 9923 / NRRL Y-1056) (Yeast).